The following is a 169-amino-acid chain: Ribosome maturation factor RimM (169 aa).

The PRC barrel domain occupies Gly-93 to Leu-166.

The protein belongs to the RimM family. Binds ribosomal protein uS19.

It is found in the cytoplasm. Functionally, an accessory protein needed during the final step in the assembly of 30S ribosomal subunit, possibly for assembly of the head region. Essential for efficient processing of 16S rRNA. May be needed both before and after RbfA during the maturation of 16S rRNA. It has affinity for free ribosomal 30S subunits but not for 70S ribosomes. The polypeptide is Ribosome maturation factor RimM (Exiguobacterium sibiricum (strain DSM 17290 / CCUG 55495 / CIP 109462 / JCM 13490 / 255-15)).